The following is a 118-amino-acid chain: Putative membrane protein insertion efficiency factor (118 aa).

This sequence belongs to the UPF0161 family.

Its subcellular location is the cell inner membrane. Could be involved in insertion of integral membrane proteins into the membrane. The chain is Putative membrane protein insertion efficiency factor from Helicobacter pylori (strain P12).